A 230-amino-acid chain; its full sequence is Uracil-DNA glycosylase (230 aa).

Residue D70 is the Proton acceptor of the active site.

It belongs to the uracil-DNA glycosylase (UDG) superfamily. UNG family.

The protein resides in the cytoplasm. The enzyme catalyses Hydrolyzes single-stranded DNA or mismatched double-stranded DNA and polynucleotides, releasing free uracil.. Its function is as follows. Excises uracil residues from the DNA which can arise as a result of misincorporation of dUMP residues by DNA polymerase or due to deamination of cytosine. The polypeptide is Uracil-DNA glycosylase (Pseudomonas fluorescens (strain ATCC BAA-477 / NRRL B-23932 / Pf-5)).